Consider the following 312-residue polypeptide: Probable deoxyhypusine synthase (312 aa).

K285 serves as the catalytic Nucleophile.

This sequence belongs to the deoxyhypusine synthase family. NAD(+) is required as a cofactor.

It carries out the reaction [eIF5A protein]-L-lysine + spermidine = [eIF5A protein]-deoxyhypusine + propane-1,3-diamine. Its pathway is protein modification; eIF5A hypusination. Its function is as follows. Catalyzes the NAD-dependent oxidative cleavage of spermidine and the subsequent transfer of the butylamine moiety of spermidine to the epsilon-amino group of a specific lysine residue of the eIF-5A precursor protein to form the intermediate deoxyhypusine residue. The sequence is that of Probable deoxyhypusine synthase from Saccharolobus islandicus (strain Y.N.15.51 / Yellowstone #2) (Sulfolobus islandicus).